Here is a 515-residue protein sequence, read N- to C-terminus: 2-isopropylmalate synthase (515 aa).

The Pyruvate carboxyltransferase domain maps to 5 to 268; sequence VIIFDTTLRD…VCGIDATQIV (264 aa). Mn(2+) is bound by residues aspartate 14, histidine 202, histidine 204, and asparagine 239. A regulatory domain region spans residues 394-515; the sequence is KFISLSQHSE…QAKLNAQMTP (122 aa).

Belongs to the alpha-IPM synthase/homocitrate synthase family. LeuA type 1 subfamily. Homodimer. Requires Mn(2+) as cofactor.

The protein localises to the cytoplasm. It catalyses the reaction 3-methyl-2-oxobutanoate + acetyl-CoA + H2O = (2S)-2-isopropylmalate + CoA + H(+). It participates in amino-acid biosynthesis; L-leucine biosynthesis; L-leucine from 3-methyl-2-oxobutanoate: step 1/4. Its function is as follows. Catalyzes the condensation of the acetyl group of acetyl-CoA with 3-methyl-2-oxobutanoate (2-ketoisovalerate) to form 3-carboxy-3-hydroxy-4-methylpentanoate (2-isopropylmalate). The sequence is that of 2-isopropylmalate synthase from Polynucleobacter necessarius subsp. necessarius (strain STIR1).